We begin with the raw amino-acid sequence, 137 residues long: Large ribosomal subunit protein uL16 (137 aa).

This sequence belongs to the universal ribosomal protein uL16 family. In terms of assembly, part of the 50S ribosomal subunit.

Its function is as follows. Binds 23S rRNA and is also seen to make contacts with the A and possibly P site tRNAs. This Ruegeria sp. (strain TM1040) (Silicibacter sp.) protein is Large ribosomal subunit protein uL16.